Here is a 1034-residue protein sequence, read N- to C-terminus: Beta-galactosidase (1034 aa).

Substrate-binding residues include asparagine 108 and aspartate 207. Residue aspartate 207 coordinates Na(+). Mg(2+)-binding residues include glutamate 423, histidine 425, and glutamate 468. Substrate is bound by residues glutamate 468 and 544–547; that span reads EYAH. Residue glutamate 468 is the Proton donor of the active site. The Nucleophile role is filled by glutamate 544. Asparagine 604 is a Mg(2+) binding site. Positions 608 and 611 each coordinate Na(+). Substrate is bound by residues asparagine 611 and tryptophan 1010.

The protein belongs to the glycosyl hydrolase 2 family. Homotetramer. It depends on Mg(2+) as a cofactor. Requires Na(+) as cofactor.

The enzyme catalyses Hydrolysis of terminal non-reducing beta-D-galactose residues in beta-D-galactosides.. This is Beta-galactosidase from Klebsiella pneumoniae.